The chain runs to 157 residues: SsrA-binding protein (157 aa).

A disordered region spans residues 133–157; the sequence is LHDKRETEKKRDWSREKGRLLRARG. The span at 135 to 151 shows a compositional bias: basic and acidic residues; the sequence is DKRETEKKRDWSREKGR.

Belongs to the SmpB family.

It is found in the cytoplasm. Required for rescue of stalled ribosomes mediated by trans-translation. Binds to transfer-messenger RNA (tmRNA), required for stable association of tmRNA with ribosomes. tmRNA and SmpB together mimic tRNA shape, replacing the anticodon stem-loop with SmpB. tmRNA is encoded by the ssrA gene; the 2 termini fold to resemble tRNA(Ala) and it encodes a 'tag peptide', a short internal open reading frame. During trans-translation Ala-aminoacylated tmRNA acts like a tRNA, entering the A-site of stalled ribosomes, displacing the stalled mRNA. The ribosome then switches to translate the ORF on the tmRNA; the nascent peptide is terminated with the 'tag peptide' encoded by the tmRNA and targeted for degradation. The ribosome is freed to recommence translation, which seems to be the essential function of trans-translation. The protein is SsrA-binding protein of Bradyrhizobium diazoefficiens (strain JCM 10833 / BCRC 13528 / IAM 13628 / NBRC 14792 / USDA 110).